The chain runs to 328 residues: Cell division protein ZipA (328 aa).

Over 1-4 (MDLN) the chain is Periplasmic. A helical transmembrane segment spans residues 5 to 25 (TILIIVGIVALVALIVHGLWS). Residues 26–328 (NRREKSKYFD…NAEQAYLARV (303 aa)) are Cytoplasmic-facing. The tract at residues 44–82 (SLTSRSHTQEEMVQPNNISPNTYVENGHTPISQPTTEKL) is disordered. A compositionally biased stretch (polar residues) spans 57 to 81 (QPNNISPNTYVENGHTPISQPTTEK).

Belongs to the ZipA family. As to quaternary structure, interacts with FtsZ via their C-terminal domains.

Its subcellular location is the cell inner membrane. In terms of biological role, essential cell division protein that stabilizes the FtsZ protofilaments by cross-linking them and that serves as a cytoplasmic membrane anchor for the Z ring. Also required for the recruitment to the septal ring of downstream cell division proteins. This is Cell division protein ZipA from Haemophilus influenzae (strain PittGG).